A 265-amino-acid chain; its full sequence is MASELPMSPHLEQIHGEIRDHFRALANGFQRLDKIKDSSRQSKQLEELAEKMRDCKRLVKEFDRELKDGEARNSPQVNKQLNDEKQSMIKELNSYVALRKTYLNTLGNKKVELFDTGAGVSGEPTAEENVQMASTMSNQELVDAGMKRMDETDQAIERSKQVVHQTLEVGTQTASNLKGQTDQMGRVVNDLDTIQFSLKKASQLVKEIGRQVATDKCIMAFLFLIVCGVIAIIIVKIVNPNNKDIRDIPGLAPPAQSRKLLYFRE.

Residues 1–217 (MASELPMSPH…IGRQVATDKC (217 aa)) are Cytoplasmic-facing. The stretch at 32 to 106 (LDKIKDSSRQ…ALRKTYLNTL (75 aa)) forms a coiled coil. Ser74 carries the phosphoserine modification. Residues 146–208 (MKRMDETDQA…KKASQLVKEI (63 aa)) form the t-SNARE coiled-coil homology domain. The chain crosses the membrane as a helical; Anchor for type IV membrane protein span at residues 218 to 238 (IMAFLFLIVCGVIAIIIVKIV). The Vesicular portion of the chain corresponds to 239 to 265 (NPNNKDIRDIPGLAPPAQSRKLLYFRE).

Belongs to the novel plant SNARE family. As to expression, expressed in roots, stems, flower, siliques and leaves.

It localises to the membrane. In terms of biological role, vesicle trafficking protein that functions in the secretory pathway. The chain is Novel plant SNARE 12 (NPSN12) from Arabidopsis thaliana (Mouse-ear cress).